The chain runs to 626 residues: MSTNQETRGFQSEVKQLLQLMIHSLYSNKEIFLRELISNASDAADKLRFKALSAPELYEGDGDLKVRISFDAEKGTLTISDNGIGMTREQVIDHLGTIAKSGTKEFLAALGQEQAKDSQLIGQFGVGFYSAFIVADKVTVKTRAAGEPIDKAVLWESAGEGEYSVADIEKKERGTEITLHLREEEKEFANEWRVREIIGKYSDHIGLPVEILAKEYDEEGKETGIKWEKINKAQALWTRSKGEISDEEYKEFYKHLSHDFADPLLWTHNKVEGNQEYTSLLYVPSKAPWDLFNREHKHGLKLYVQRVFIMDDAEQFMPNYLRFMRGLIDSNDLPLNVSREILQDNKVTAALRKALTKRSLQMLEKLAKDDEEKYLQFWKEFGLVLKEGPSEDFANKENIAKLLRFASSKNDSSEQTVSLEDYVARMKEGQKAIYYITADSYIAAKNSPHLELFNKKDIEVLLLSDRIDEWMLSYLTEFDGKQLQPITKADLDLGDLADKEQEEQKEQDKTFSSFIERVKTLLGERVKDVRLTHRLTDTPAVVSTDNDQMTTQMAKLFAAAGQPVPEVKYTFELNPEHHLVKKVADLADEDEFANWIELLLEQAMLAERGSLENPTAFIKRVNSLLS.

The a; substrate-binding stretch occupies residues 1-339 (MSTNQETRGF…SNDLPLNVSR (339 aa)). The tract at residues 340–555 (EILQDNKVTA…NDQMTTQMAK (216 aa)) is b. Residues 556–626 (LFAAAGQPVP…FIKRVNSLLS (71 aa)) are c.

The protein belongs to the heat shock protein 90 family. As to quaternary structure, homodimer.

Its subcellular location is the cytoplasm. Molecular chaperone. Has ATPase activity. In Histophilus somni (strain 129Pt) (Haemophilus somnus), this protein is Chaperone protein HtpG.